We begin with the raw amino-acid sequence, 181 residues long: Large ribosomal subunit protein uL5 (181 aa).

Belongs to the universal ribosomal protein uL5 family. As to quaternary structure, part of the 50S ribosomal subunit; part of the 5S rRNA/L5/L18/L25 subcomplex. Contacts the 5S rRNA and the P site tRNA. Forms a bridge to the 30S subunit in the 70S ribosome.

Its function is as follows. This is one of the proteins that bind and probably mediate the attachment of the 5S RNA into the large ribosomal subunit, where it forms part of the central protuberance. In the 70S ribosome it contacts protein S13 of the 30S subunit (bridge B1b), connecting the 2 subunits; this bridge is implicated in subunit movement. Contacts the P site tRNA; the 5S rRNA and some of its associated proteins might help stabilize positioning of ribosome-bound tRNAs. This is Large ribosomal subunit protein uL5 from Thermosipho africanus (strain TCF52B).